The primary structure comprises 1369 residues: DNA-directed RNA polymerase subunit beta' (1369 aa).

The interval 1-43 is disordered; the sequence is MTSSSPKTRKSSTKSKAKRGSKSKKAAEIKAVQRLSKTPPPFR. Over residues 7-24 the composition is skewed to basic residues; it reads KTRKSSTKSKAKRGSKSK. Positions 253, 320, 327, and 330 each coordinate Zn(2+). A disordered region spans residues 1294 to 1369; that stretch reads TVDMPSSPVA…LQEEGLLSDE (76 aa). Acidic residues predominate over residues 1342-1351; the sequence is DDELSAEDQM. Positions 1357–1369 are enriched in low complexity; the sequence is LEGLQEEGLLSDE.

The protein belongs to the RNA polymerase beta' chain family. RpoC2 subfamily. In terms of assembly, in cyanobacteria the RNAP catalytic core is composed of 2 alpha, 1 beta, 1 beta', 1 gamma and 1 omega subunit. When a sigma factor is associated with the core the holoenzyme is formed, which can initiate transcription. The cofactor is Zn(2+).

The catalysed reaction is RNA(n) + a ribonucleoside 5'-triphosphate = RNA(n+1) + diphosphate. DNA-dependent RNA polymerase catalyzes the transcription of DNA into RNA using the four ribonucleoside triphosphates as substrates. The sequence is that of DNA-directed RNA polymerase subunit beta' from Prochlorococcus marinus (strain NATL1A).